A 520-amino-acid polypeptide reads, in one-letter code: ATP-dependent RNA helicase CshA (520 aa).

The Q motif signature appears at Thr-2–Glu-30. In terms of domain architecture, Helicase ATP-binding spans Ile-33–Ile-203. Ala-46 to Thr-53 is a binding site for ATP. A DEAD box motif is present at residues Asp-151–Asp-154. Residues Leu-214–Ala-374 form the Helicase C-terminal domain. The segment covering Lys-428 to Leu-439 has biased composition (basic and acidic residues). The segment at Lys-428–Lys-520 is disordered. 2 stretches are compositionally biased toward gly residues: residues Arg-442–Gly-468 and Ser-482–Gly-496.

It belongs to the DEAD box helicase family. CshA subfamily. Oligomerizes, may be a member of the RNA degradosome.

The protein resides in the cytoplasm. It carries out the reaction ATP + H2O = ADP + phosphate + H(+). Functionally, DEAD-box RNA helicase possibly involved in RNA degradation. Unwinds dsRNA in both 5'- and 3'-directions, has RNA-dependent ATPase activity. Involved in cold tolerance, motility and alcohol tolerance. This is ATP-dependent RNA helicase CshA from Listeria monocytogenes serovar 1/2a (strain ATCC BAA-679 / EGD-e).